The primary structure comprises 94 residues: Protein S100-A1 (94 aa).

EF-hand domains are found at residues 13–48 (INVF…FLDA) and 50–85 (KDVD…LTVA). Residues Lys28, Glu33, Asp63, Asn65, Asp67, Glu69, and Glu74 each contribute to the Ca(2+) site. Cys86 carries the post-translational modification S-nitrosocysteine.

It belongs to the S-100 family. In terms of assembly, dimer of either two alpha chains, or two beta chains, or one alpha and one beta chain. Also forms heterodimers with S100P. Interacts with AGER. Interacts with CAPZA1. Interacts with FKBP4. Interacts with RYR1 and RYR2. Interacts with CACYBP in a calcium-dependent manner. Interacts with PPP5C (via TPR repeats); the interaction is calcium-dependent and modulates PPP5C activity. Interacts with ATP2A2 and PLN in a Ca(2+)-dependent manner. Interacts with mitochondrial F1-ATPase subunits ATP5F1A and ATP5F1B; these interactions increase F1-ATPase activity. Glutathionylated; glutathionylation increases affinity to calcium about 10-fold. In terms of tissue distribution, highly prevalent in heart. Also found in lesser quantities in skeletal muscle and brain.

Its subcellular location is the cytoplasm. It is found in the sarcoplasmic reticulum. The protein resides in the mitochondrion. Functionally, small calcium binding protein that plays important roles in several biological processes such as Ca(2+) homeostasis, chondrocyte biology and cardiomyocyte regulation. In response to an increase in intracellular Ca(2+) levels, binds calcium which triggers conformational changes. These changes allow interactions with specific target proteins and modulate their activity. Regulates a network in cardiomyocytes controlling sarcoplasmic reticulum Ca(2+) cycling and mitochondrial function through interaction with the ryanodine receptors RYR1 and RYR2, sarcoplasmic reticulum Ca(2+)-ATPase/ATP2A2 and mitochondrial F1-ATPase. Facilitates diastolic Ca(2+) dissociation and myofilament mechanics in order to improve relaxation during diastole. This is Protein S100-A1 (S100A1) from Homo sapiens (Human).